An 841-amino-acid polypeptide reads, in one-letter code: Probable alpha-glucuronidase A (841 aa).

The N-terminal stretch at 1-19 is a signal peptide; that stretch reads MLRLPLVLVWSLWASLTVA. N-linked (GlcNAc...) asparagine glycans are attached at residues Asn-50, Asn-104, Asn-223, Asn-280, Asn-311, Asn-344, Asn-466, Asn-528, Asn-577, Asn-683, Asn-724, and Asn-733.

The protein belongs to the glycosyl hydrolase 67 family.

It localises to the secreted. It carries out the reaction an alpha-D-glucuronoside + H2O = D-glucuronate + an alcohol. Functionally, alpha-glucuronidase involved in the hydrolysis of xylan, a major structural heterogeneous polysaccharide found in plant biomass representing the second most abundant polysaccharide in the biosphere, after cellulose. Releases 4-O-methylglucuronic acid from xylan. The sequence is that of Probable alpha-glucuronidase A (aguA) from Aspergillus terreus (strain NIH 2624 / FGSC A1156).